A 487-amino-acid chain; its full sequence is UDP-N-acetylmuramate--L-alanine ligase (487 aa).

126–132 (GTHGKTT) lines the ATP pocket.

This sequence belongs to the MurCDEF family.

The protein localises to the cytoplasm. It catalyses the reaction UDP-N-acetyl-alpha-D-muramate + L-alanine + ATP = UDP-N-acetyl-alpha-D-muramoyl-L-alanine + ADP + phosphate + H(+). It functions in the pathway cell wall biogenesis; peptidoglycan biosynthesis. Cell wall formation. The chain is UDP-N-acetylmuramate--L-alanine ligase from Proteus mirabilis (strain HI4320).